Consider the following 158-residue polypeptide: 6,7-dimethyl-8-ribityllumazine synthase (158 aa).

5-amino-6-(D-ribitylamino)uracil contacts are provided by residues Phe-22, 57–59, and 81–83; these read AVE and AVI. 86–87 contributes to the (2S)-2-hydroxy-3-oxobutyl phosphate binding site; that stretch reads GT. His-89 (proton donor) is an active-site residue. Phe-114 contributes to the 5-amino-6-(D-ribitylamino)uracil binding site. Position 128 (Arg-128) interacts with (2S)-2-hydroxy-3-oxobutyl phosphate.

This sequence belongs to the DMRL synthase family. Forms an icosahedral capsid composed of 60 subunits, arranged as a dodecamer of pentamers.

It catalyses the reaction (2S)-2-hydroxy-3-oxobutyl phosphate + 5-amino-6-(D-ribitylamino)uracil = 6,7-dimethyl-8-(1-D-ribityl)lumazine + phosphate + 2 H2O + H(+). The protein operates within cofactor biosynthesis; riboflavin biosynthesis; riboflavin from 2-hydroxy-3-oxobutyl phosphate and 5-amino-6-(D-ribitylamino)uracil: step 1/2. In terms of biological role, catalyzes the formation of 6,7-dimethyl-8-ribityllumazine by condensation of 5-amino-6-(D-ribitylamino)uracil with 3,4-dihydroxy-2-butanone 4-phosphate. This is the penultimate step in the biosynthesis of riboflavin. This is 6,7-dimethyl-8-ribityllumazine synthase from Shewanella pealeana (strain ATCC 700345 / ANG-SQ1).